The primary structure comprises 254 residues: Probable membrane transporter protein YjnA (254 aa).

6 consecutive transmembrane segments (helical) span residues 5–25 (IILM…GGAA), 75–95 (AIGS…FPAF), 105–125 (HALG…LFLD), 143–163 (ALTI…SIGS), 187–207 (IAHA…FGSV), and 209–229 (YMLA…GSHL).

Belongs to the 4-toluene sulfonate uptake permease (TSUP) (TC 2.A.102) family.

It localises to the cell membrane. This is Probable membrane transporter protein YjnA (yjnA) from Bacillus subtilis (strain 168).